Here is a 443-residue protein sequence, read N- to C-terminus: Xaa-Pro dipeptidase (443 aa).

Mn(2+)-binding residues include D246, D257, H339, E384, and E423.

Belongs to the peptidase M24B family. Bacterial-type prolidase subfamily. Mn(2+) serves as cofactor.

The enzyme catalyses Xaa-L-Pro dipeptide + H2O = an L-alpha-amino acid + L-proline. Its function is as follows. Splits dipeptides with a prolyl residue in the C-terminal position. The protein is Xaa-Pro dipeptidase of Klebsiella pneumoniae (strain 342).